The chain runs to 504 residues: Sperm motility kinase 3A (504 aa).

Residues 28-276 (YVMLETIGHG…VAEVMVHPWV (249 aa)) form the Protein kinase domain. ATP contacts are provided by residues 34-42 (IGHGGCATV) and lysine 57. Aspartate 147 acts as the Proton acceptor in catalysis. Residues 294 to 334 (KPDPAIVKAMGHIGFQAQDIEDSLRQRKFNQTMASYCLLKK) enclose the UBA domain. Disordered regions lie at residues 389–421 (VCGKSTSKKRDRRVSWPSVLGRPRHTAPTMDHT) and 441–468 (NSSEESTQGHTRASAADKPVHSRGWPRG). The segment covering 441–451 (NSSEESTQGHT) has biased composition (polar residues).

This sequence belongs to the protein kinase superfamily. CAMK Ser/Thr protein kinase family. Smok subfamily. In terms of tissue distribution, testis-specific. Expressed in the testis from 22 days postpartum (22 dpp).

The enzyme catalyses L-seryl-[protein] + ATP = O-phospho-L-seryl-[protein] + ADP + H(+). It catalyses the reaction L-threonyl-[protein] + ATP = O-phospho-L-threonyl-[protein] + ADP + H(+). In terms of biological role, may play a role in sperm motility, especially in the regulation of flagellar function. In Mus musculus (Mouse), this protein is Sperm motility kinase 3A.